We begin with the raw amino-acid sequence, 160 residues long: UPF0225 protein PP_1119 (160 aa).

The protein belongs to the UPF0225 family.

The protein is UPF0225 protein PP_1119 of Pseudomonas putida (strain ATCC 47054 / DSM 6125 / CFBP 8728 / NCIMB 11950 / KT2440).